Consider the following 581-residue polypeptide: Potassium-transporting ATPase potassium-binding subunit (581 aa).

12 consecutive transmembrane segments (helical) span residues L2–F22, A74–P94, G135–I155, I177–T197, L255–F275, L284–E304, W332–A352, L357–G377, G381–G401, F421–F441, L501–L521, and A550–I570.

It belongs to the KdpA family. In terms of assembly, the system is composed of three essential subunits: KdpA, KdpB and KdpC.

Its subcellular location is the cell inner membrane. Functionally, part of the high-affinity ATP-driven potassium transport (or Kdp) system, which catalyzes the hydrolysis of ATP coupled with the electrogenic transport of potassium into the cytoplasm. This subunit binds the periplasmic potassium ions and delivers the ions to the membrane domain of KdpB through an intramembrane tunnel. This is Potassium-transporting ATPase potassium-binding subunit from Microcystis aeruginosa (strain NIES-843 / IAM M-2473).